We begin with the raw amino-acid sequence, 234 residues long: Biotin transport ATP-binding protein BioM (234 aa).

The 230-residue stretch at 1 to 230 (MQAIDIGHVT…YIAAMQALAR (230 aa)) folds into the ABC transporter domain. 35 to 42 (GRNGAGKS) is a binding site for ATP.

This sequence belongs to the ABC transporter superfamily. Part of a biotin transporter holocomplex composed of BioM, BioN and BioY. BioMN complexes can be readily purified, but not BioMY complexes. Only the BioMNY complex has ATPase activity.

It is found in the cell inner membrane. Its function is as follows. Required for biotin uptake under very low (pM) biotin concentrations but not under higher (nM) concentrations. The protein is Biotin transport ATP-binding protein BioM (bioM) of Rhodobacter capsulatus (strain ATCC BAA-309 / NBRC 16581 / SB1003).